A 106-amino-acid polypeptide reads, in one-letter code: Small ribosomal subunit protein uS10 (106 aa).

It belongs to the universal ribosomal protein uS10 family. As to quaternary structure, part of the 30S ribosomal subunit.

Its function is as follows. Involved in the binding of tRNA to the ribosomes. The chain is Small ribosomal subunit protein uS10 from Prochlorococcus marinus subsp. pastoris (strain CCMP1986 / NIES-2087 / MED4).